The sequence spans 435 residues: Serine--tRNA ligase (435 aa).

239–241 (TAE) provides a ligand contact to L-serine. Position 270–272 (270–272 (RAE)) interacts with ATP. E293 provides a ligand contact to L-serine. Position 357-360 (357-360 (EISS)) interacts with ATP. L-serine is bound at residue S393.

Belongs to the class-II aminoacyl-tRNA synthetase family. Type-1 seryl-tRNA synthetase subfamily. Homodimer. The tRNA molecule binds across the dimer.

Its subcellular location is the cytoplasm. It catalyses the reaction tRNA(Ser) + L-serine + ATP = L-seryl-tRNA(Ser) + AMP + diphosphate + H(+). The catalysed reaction is tRNA(Sec) + L-serine + ATP = L-seryl-tRNA(Sec) + AMP + diphosphate + H(+). Its pathway is aminoacyl-tRNA biosynthesis; selenocysteinyl-tRNA(Sec) biosynthesis; L-seryl-tRNA(Sec) from L-serine and tRNA(Sec): step 1/1. In terms of biological role, catalyzes the attachment of serine to tRNA(Ser). Is also able to aminoacylate tRNA(Sec) with serine, to form the misacylated tRNA L-seryl-tRNA(Sec), which will be further converted into selenocysteinyl-tRNA(Sec). This is Serine--tRNA ligase from Parvibaculum lavamentivorans (strain DS-1 / DSM 13023 / NCIMB 13966).